The primary structure comprises 301 residues: tRNA uridine(34) hydroxylase (301 aa).

A Rhodanese domain is found at 121–212 (NDKDTLVLDS…YLKNIKKKES (92 aa)). The Cysteine persulfide intermediate role is filled by C172.

This sequence belongs to the TrhO family.

It catalyses the reaction uridine(34) in tRNA + AH2 + O2 = 5-hydroxyuridine(34) in tRNA + A + H2O. Its function is as follows. Catalyzes oxygen-dependent 5-hydroxyuridine (ho5U) modification at position 34 in tRNAs. The chain is tRNA uridine(34) hydroxylase from Pelagibacter ubique (strain HTCC1062).